A 47-amino-acid chain; its full sequence is Delta-stichotoxin-Hcr3a (47 aa).

Residue P3 is modified to Hydroxyproline. 3 disulfides stabilise this stretch: C4-C44, C6-C34, and C27-C45.

This sequence belongs to the sea anemone sodium channel inhibitory toxin family. Type I subfamily.

Its subcellular location is the secreted. It localises to the nematocyst. Inhibits voltage-gated sodium channels (Nav). The polypeptide is Delta-stichotoxin-Hcr3a (Radianthus crispa (Leathery sea anemone)).